Consider the following 37-residue polypeptide: Large ribosomal subunit protein bL36c (37 aa).

It belongs to the bacterial ribosomal protein bL36 family.

Its subcellular location is the plastid. It localises to the chloroplast. In Lolium perenne (Perennial ryegrass), this protein is Large ribosomal subunit protein bL36c.